We begin with the raw amino-acid sequence, 670 residues long: Solute carrier organic anion transporter family member 1A4 (670 aa).

Topologically, residues 1 to 20 (MGKSEKEVATHGVRCFSKIK) are cytoplasmic. A helical transmembrane segment spans residues 21–40 (AFLLALTCAYVSKSLSGTYM). The Extracellular segment spans residues 41–59 (NSMLTQIERQFGIPTSVVG). Residues 60 to 80 (LINGSFEIGNLLLIIFVSYFG) traverse the membrane as a helical segment. Residues 81–86 (TKLHRP) lie on the Cytoplasmic side of the membrane. Residues 87-111 (IMIGVGCAVMGLGCFLISIPHFLMG) form a helical membrane-spanning segment. Over 112–155 (RYEYETTILPTSNLSSNSFVCTENRTQTLKPTQDPTECVKEMKS) the chain is Extracellular. Asn124 and Asn135 each carry an N-linked (GlcNAc...) asparagine glycan. Residues 156-184 (LMWIYVLVGNIIRGMGETPIMPLGISYIE) form a helical membrane-spanning segment. The Cytoplasmic portion of the chain corresponds to 185–203 (DFAKSENSPLYIGILETGM). A helical membrane pass occupies residues 204–224 (TIGPLIGLLLGSSCANIYVDT). Topologically, residues 225-242 (GSVNTDDLTITPTDTRWV) are extracellular. Residues 243–267 (GAWWIGFLVCAGVNILTSIPFFFFP) form a helical membrane-spanning segment. At 268–311 (KTLLKEGLQDNGDGTENAKEEKHREKIKEENRGITKDFFLFMKS) the chain is on the cytoplasmic side. Residues 312 to 333 (LSCNPIYMIFILISVIQVNAFI) traverse the membrane as a helical segment. Residues 334–353 (NSFTFMPKYLEQQYGKSTAE) are Extracellular-facing. The chain crosses the membrane as a helical span at residues 354–377 (IVFLMGLYMLPPICLGYLIGGLIM). Residues 378 to 381 (KKFK) lie on the Cytoplasmic side of the membrane. Residues 382 to 405 (ITVKKAAYIGFWLSLTEYLLSFVS) form a helical membrane-spanning segment. Residues 406–513 (YIMTCDNFPV…PECANKLQYF (108 aa)) lie on the Extracellular side of the membrane. The region spanning 433–488 (NNVLADCNTKCSCLTNTWDPVCGDNGLSYMSACLAGCEKSVGTGTNMVFQNCSCIQ) is the Kazal-like domain. 3 disulfide bridges follow: Cys439-Cys469, Cys445-Cys465, and Cys454-Cys486. Residues Asn483 and Asn492 are each glycosylated (N-linked (GlcNAc...) asparagine). The helical transmembrane segment at 514 to 536 (LIISIIGCFIFSLGAIPGYMVLL) threads the bilayer. The Cytoplasmic portion of the chain corresponds to 537–545 (RCMKSEEKS). Residues 546 to 571 (LGVGLHTFCMRILGGIPAPIYFGALI) traverse the membrane as a helical segment. Topologically, residues 572-605 (DRTCLHWGTLKCGEPGACRMYDINSFRRIYLGLP) are extracellular. The chain crosses the membrane as a helical span at residues 606-623 (AALRGASFLPALFILILM). The Cytoplasmic segment spans residues 624 to 670 (RKFQFPGDIDSSDTDPAEMKLTAKESKCTNVHRSPTMQNDGERKTKL). Residues Ser634 and Ser635 each carry the phosphoserine modification. Residues 649–670 (SKCTNVHRSPTMQNDGERKTKL) form a disordered region. Over residues 651 to 662 (CTNVHRSPTMQN) the composition is skewed to polar residues.

It belongs to the organo anion transporter (TC 2.A.60) family. As to expression, highly expressed in brain and liver. Detected at very low levels in heart and lung.

The protein localises to the cell membrane. It carries out the reaction estrone 3-sulfate(out) = estrone 3-sulfate(in). The enzyme catalyses taurocholate(out) = taurocholate(in). It catalyses the reaction prostaglandin E2(out) = prostaglandin E2(in). The catalysed reaction is L-thyroxine(out) = L-thyroxine(in). Its function is as follows. Mediates the Na(+)-independent transport of organic anions such as taurocholate, cholate, 17-beta-glucuronosyl estradiol, prostaglandin E2, estrone 3-sulfate, L-thyroxine (T4), the cardiac glycosides ouabain and digoxin and thyroid hormones. Shows a pH-sensitive substrate specificity which may be ascribed to the protonation state of the binding site and leads to a stimulation of substrate transport in an acidic microenvironment. Hydrogencarbonate/HCO3(-) acts as the probable counteranion that exchanges for organic anions. The sequence is that of Solute carrier organic anion transporter family member 1A4 (Slco1a4) from Mus musculus (Mouse).